The chain runs to 91 residues: Small ribosomal subunit protein bS18 (91 aa).

The protein belongs to the bacterial ribosomal protein bS18 family. In terms of assembly, part of the 30S ribosomal subunit. Forms a tight heterodimer with protein bS6.

Binds as a heterodimer with protein bS6 to the central domain of the 16S rRNA, where it helps stabilize the platform of the 30S subunit. The sequence is that of Small ribosomal subunit protein bS18 from Burkholderia vietnamiensis (strain G4 / LMG 22486) (Burkholderia cepacia (strain R1808)).